A 1004-amino-acid chain; its full sequence is uncharacterized protein (1004 aa).

N27 is a glycosylation site (N-linked (GlcNAc...) asparagine). Transmembrane regions (helical) follow at residues 38 to 58 (FGFS…LLAI), 77 to 97 (IVPD…LIVI), 188 to 208 (LSPV…LIAY), and 324 to 344 (FILM…SLFS). N392, N418, and N421 each carry an N-linked (GlcNAc...) asparagine glycan. A run of 2 helical transmembrane segments spans residues 422-442 (MSLS…VIAF) and 599-619 (MSNI…IIDM). N627 is a glycosylation site (N-linked (GlcNAc...) asparagine). 2 consecutive transmembrane segments (helical) span residues 726 to 746 (GYPL…ISVF) and 823 to 843 (GDYI…VLGS). N859 is a glycosylation site (N-linked (GlcNAc...) asparagine).

The protein to yeast YPR031w.

The protein localises to the membrane. This is an uncharacterized protein from Schizosaccharomyces pombe (strain 972 / ATCC 24843) (Fission yeast).